A 163-amino-acid chain; its full sequence is Epididymal-specific lipocalin-6 (163 aa).

A signal peptide spans 1–20; it reads MGGLLLAAFLALVSVPRAQA.

The protein belongs to the calycin superfamily. Lipocalin family. Predominantly expressed in epididymis.

It is found in the secreted. Its function is as follows. May play a role in male fertility. The sequence is that of Epididymal-specific lipocalin-6 (LCN6) from Homo sapiens (Human).